The following is a 128-amino-acid chain: Deoxycytidylate deaminase (128 aa).

Positions 5-128 constitute a CMP/dCMP-type deaminase domain; that stretch reads DWDEYFLGIA…IERVVYPKES (124 aa). His81 provides a ligand contact to Zn(2+). The active-site Proton donor is the Glu83. 2 residues coordinate Zn(2+): Cys107 and Cys110.

This sequence belongs to the cytidine and deoxycytidylate deaminase family.

The enzyme catalyses dCMP + H2O + H(+) = dUMP + NH4(+). The chain is Deoxycytidylate deaminase (36.1) from Mycobacterium (Mycobacteriophage D29).